An 83-amino-acid polypeptide reads, in one-letter code: Hainantoxin-III 7 (83 aa).

The first 21 residues, 1–21 (MKASMFLALAGLVLLFVVGYA), serve as a signal peptide directing secretion. A propeptide spanning residues 22 to 48 (SESEEKEFPRELLSKVFAVDDFKGEER) is cleaved from the precursor. 3 disulfide bridges follow: C50-C65, C57-C70, and C64-C77. L81 is subject to Leucine amide.

This sequence belongs to the neurotoxin 10 (Hwtx-1) family. 15 (Hntx-3) subfamily. In terms of assembly, monomer. In terms of tissue distribution, expressed by the venom gland.

The protein resides in the secreted. Functionally, selective antagonist of neuronal tetrodotoxin (TTX)-sensitive voltage-gated sodium channels (IC(50)=1270 nM on Nav1.1/SCN1A, 270 nM on Nav1.2/SCN2A, 491 nM on Nav1.3/SCN3A and 232 nM on Nav1.7/SCN9A). This toxin suppress Nav1.7 current amplitude without significantly altering the activation, inactivation, and repriming kinetics. Short extreme depolarizations partially activate the toxin-bound channel, indicating voltage-dependent inhibition of this toxin. This toxin increases the deactivation of the Nav1.7 current after extreme depolarizations. The toxin-Nav1.7 complex is gradually dissociated upon prolonged strong depolarizations in a voltage-dependent manner, and the unbound toxin rebinds to Nav1.7 after a long repolarization. Moreover, analysis of chimeric channels showed that the DIIS3-S4 linker is critical for toxin binding to Nav1.7. These data are consistent with this toxin interacting with Nav1.7 site 4 and trapping the domain II voltage sensor in the closed state. The chain is Hainantoxin-III 7 from Cyriopagopus hainanus (Chinese bird spider).